A 212-amino-acid polypeptide reads, in one-letter code: ATP-dependent dethiobiotin synthetase BioD (212 aa).

Residue 12 to 17 (DCGKTF) participates in ATP binding. Thr-16 contributes to the Mg(2+) binding site. The active site involves Lys-33. Ser-37 provides a ligand contact to substrate. ATP-binding positions include Asp-50, 110–113 (EGAG), and 170–171 (NC). Positions 50 and 110 each coordinate Mg(2+).

This sequence belongs to the dethiobiotin synthetase family. In terms of assembly, homodimer. Requires Mg(2+) as cofactor.

It is found in the cytoplasm. It catalyses the reaction (7R,8S)-7,8-diammoniononanoate + CO2 + ATP = (4R,5S)-dethiobiotin + ADP + phosphate + 3 H(+). It functions in the pathway cofactor biosynthesis; biotin biosynthesis; biotin from 7,8-diaminononanoate: step 1/2. Catalyzes a mechanistically unusual reaction, the ATP-dependent insertion of CO2 between the N7 and N8 nitrogen atoms of 7,8-diaminopelargonic acid (DAPA, also called 7,8-diammoniononanoate) to form a ureido ring. The protein is ATP-dependent dethiobiotin synthetase BioD of Legionella pneumophila subsp. pneumophila (strain Philadelphia 1 / ATCC 33152 / DSM 7513).